A 349-amino-acid chain; its full sequence is Glycerol-1-phosphate dehydrogenase [NAD(P)+] (349 aa).

NAD(+) contacts are provided by residues 95-99 (GKSID) and 117-120 (TSPS). D122 provides a ligand contact to substrate. S126 is an NAD(+) binding site. Position 169 (D169) interacts with substrate. Residues D169 and H249 each contribute to the Zn(2+) site. H253 contacts substrate. H265 is a binding site for Zn(2+).

The protein belongs to the glycerol-1-phosphate dehydrogenase family. In terms of assembly, homodimer. Requires Zn(2+) as cofactor.

It is found in the cytoplasm. It catalyses the reaction sn-glycerol 1-phosphate + NAD(+) = dihydroxyacetone phosphate + NADH + H(+). The catalysed reaction is sn-glycerol 1-phosphate + NADP(+) = dihydroxyacetone phosphate + NADPH + H(+). Its pathway is membrane lipid metabolism; glycerophospholipid metabolism. Functionally, catalyzes the NAD(P)H-dependent reduction of dihydroxyacetonephosphate (DHAP or glycerone phosphate) to glycerol 1-phosphate (G1P). The G1P thus generated is used as the glycerophosphate backbone of phospholipids in the cellular membranes of Archaea. The protein is Glycerol-1-phosphate dehydrogenase [NAD(P)+] of Hyperthermus butylicus (strain DSM 5456 / JCM 9403 / PLM1-5).